Here is a 233-residue protein sequence, read N- to C-terminus: Attacin-B (233 aa).

The signal sequence occupies residues 1–17 (MFAKLFLVSVLLVGVNS). A propeptide spanning residues 18–46 (RYVLVEEPGYYDKQYEEQPQQWVNSRVRR) is cleaved from the precursor.

It belongs to the attacin/sarcotoxin-2 family.

The protein localises to the secreted. Its function is as follows. Hemolymph antibacterial protein. The sequence is that of Attacin-B from Hyalophora cecropia (Cecropia moth).